A 78-amino-acid polypeptide reads, in one-letter code: Large ribosomal subunit protein bL28 (78 aa).

Positions 1–27 are disordered; sequence MSAYCQVTGRKPSFGKSVSHSHRRTNR.

It belongs to the bacterial ribosomal protein bL28 family.

This Corynebacterium kroppenstedtii (strain DSM 44385 / JCM 11950 / CIP 105744 / CCUG 35717) protein is Large ribosomal subunit protein bL28.